The following is a 315-amino-acid chain: DNA-directed RNA polymerase subunit alpha (315 aa).

Residues 1 to 228 form an alpha N-terminal domain (alpha-NTD) region; that stretch reads MLEIEKPIIE…EHFKLFMSLT (228 aa). An alpha C-terminal domain (alpha-CTD) region spans residues 245 to 315; it reads KEKVLEMTVE…LGLALKLTEE (71 aa).

It belongs to the RNA polymerase alpha chain family. As to quaternary structure, homodimer. The RNAP catalytic core consists of 2 alpha, 1 beta, 1 beta' and 1 omega subunit. When a sigma factor is associated with the core the holoenzyme is formed, which can initiate transcription.

The catalysed reaction is RNA(n) + a ribonucleoside 5'-triphosphate = RNA(n+1) + diphosphate. In terms of biological role, DNA-dependent RNA polymerase catalyzes the transcription of DNA into RNA using the four ribonucleoside triphosphates as substrates. In Clostridium beijerinckii (strain ATCC 51743 / NCIMB 8052) (Clostridium acetobutylicum), this protein is DNA-directed RNA polymerase subunit alpha.